We begin with the raw amino-acid sequence, 280 residues long: Trypsin zeta (280 aa).

Positions 1–22 (MSSSWIVGLLAFLVSLVALTQG) are cleaved as a signal peptide. Positions 23-38 (LPLLEDLDEKSVPDGR) are cleaved as a propeptide — activation peptide. The Peptidase S1 domain maps to 39-278 (IVGGYATDIA…LRPWIDAVLA (240 aa)). Cys-72 and Cys-88 form a disulfide bridge. Active-site charge relay system residues include His-87 and Asp-134. 2 disulfides stabilise this stretch: Cys-198-Cys-218 and Cys-230-Cys-254. Ser-234 functions as the Charge relay system in the catalytic mechanism.

Belongs to the peptidase S1 family.

The protein resides in the secreted. The protein localises to the extracellular space. The enzyme catalyses Preferential cleavage: Arg-|-Xaa, Lys-|-Xaa.. The polypeptide is Trypsin zeta (zetaTry) (Drosophila melanogaster (Fruit fly)).